A 337-amino-acid polypeptide reads, in one-letter code: Glycerol-3-phosphate dehydrogenase [NAD(P)+] (337 aa).

NADPH is bound by residues W11, R30, and K102. 3 residues coordinate sn-glycerol 3-phosphate: K102, G138, and S140. A142 lines the NADPH pocket. Residues K193, D246, S256, R257, and N258 each contribute to the sn-glycerol 3-phosphate site. The active-site Proton acceptor is K193. Residue R257 participates in NADPH binding. NADPH-binding residues include V281 and E283.

This sequence belongs to the NAD-dependent glycerol-3-phosphate dehydrogenase family.

It is found in the cytoplasm. The enzyme catalyses sn-glycerol 3-phosphate + NAD(+) = dihydroxyacetone phosphate + NADH + H(+). The catalysed reaction is sn-glycerol 3-phosphate + NADP(+) = dihydroxyacetone phosphate + NADPH + H(+). The protein operates within membrane lipid metabolism; glycerophospholipid metabolism. Catalyzes the reduction of the glycolytic intermediate dihydroxyacetone phosphate (DHAP) to sn-glycerol 3-phosphate (G3P), the key precursor for phospholipid synthesis. The polypeptide is Glycerol-3-phosphate dehydrogenase [NAD(P)+] (Variovorax paradoxus (strain S110)).